The following is a 367-amino-acid chain: Probable peptidoglycan glycosyltransferase FtsW (367 aa).

9 helical membrane-spanning segments follow: residues 32–52 (LIFILIGLFAMAFTFLMPMKF), 57–77 (AFWGYCICFLLLALVLVPGIG), 87–107 (IPIGPFNFQPSEFAKLTMIVF), 119–139 (IHGLKGFLPIIIYLGIICFLL), 149–169 (MVVVAIVMSILLLGGLGFALF), 171–191 (LLFLSAVLLVIAAILTAPWRM), 251–271 (VVGEELGFVGIFFVILLFVLL), 296–316 (GVVVWFGVQAIVNLGVCFGVF), and 323–343 (LPFISYGGSSIVISLMAFGLL).

Belongs to the SEDS family. FtsW subfamily.

It localises to the cell inner membrane. It carries out the reaction [GlcNAc-(1-&gt;4)-Mur2Ac(oyl-L-Ala-gamma-D-Glu-L-Lys-D-Ala-D-Ala)](n)-di-trans,octa-cis-undecaprenyl diphosphate + beta-D-GlcNAc-(1-&gt;4)-Mur2Ac(oyl-L-Ala-gamma-D-Glu-L-Lys-D-Ala-D-Ala)-di-trans,octa-cis-undecaprenyl diphosphate = [GlcNAc-(1-&gt;4)-Mur2Ac(oyl-L-Ala-gamma-D-Glu-L-Lys-D-Ala-D-Ala)](n+1)-di-trans,octa-cis-undecaprenyl diphosphate + di-trans,octa-cis-undecaprenyl diphosphate + H(+). The protein operates within cell wall biogenesis; peptidoglycan biosynthesis. Its function is as follows. Peptidoglycan polymerase that is essential for cell division. The chain is Probable peptidoglycan glycosyltransferase FtsW from Taylorella equigenitalis (strain MCE9).